A 282-amino-acid chain; its full sequence is Large ribosomal subunit protein uL4c (282 aa).

The N-terminal 49 residues, 1 to 49 (MASSATAPNSLSFFSSSLFLSSSHQIPKTYISVSKLGSGRVSKPLSVSS), are a transit peptide targeting the chloroplast. The disordered stretch occupies residues 106–138 (EVRGGGIKPYSQKKTGHARRGSQRTPLRPGGGV).

Belongs to the universal ribosomal protein uL4 family. In terms of assembly, part of the 50S ribosomal subunit.

It is found in the plastid. The protein localises to the chloroplast. Its function is as follows. This protein binds directly and specifically to 23S rRNA. May play a role in plastid transcriptional regulation. The protein is Large ribosomal subunit protein uL4c (RPL4) of Arabidopsis thaliana (Mouse-ear cress).